Here is a 471-residue protein sequence, read N- to C-terminus: Ribulose bisphosphate carboxylase large chain (471 aa).

Residues Asn115 and Thr165 each contribute to the substrate site. Lys167 (proton acceptor) is an active-site residue. Lys169 contacts substrate. 3 residues coordinate Mg(2+): Lys193, Asp195, and Glu196. At Lys193 the chain carries N6-carboxylysine. His286 functions as the Proton acceptor in the catalytic mechanism. Residues Arg287, His319, and Ser371 each coordinate substrate.

Belongs to the RuBisCO large chain family. Type I subfamily. As to quaternary structure, heterohexadecamer of 8 large chains and 8 small chains. It depends on Mg(2+) as a cofactor.

Its subcellular location is the carboxysome. The enzyme catalyses 2 (2R)-3-phosphoglycerate + 2 H(+) = D-ribulose 1,5-bisphosphate + CO2 + H2O. It catalyses the reaction D-ribulose 1,5-bisphosphate + O2 = 2-phosphoglycolate + (2R)-3-phosphoglycerate + 2 H(+). Its function is as follows. RuBisCO catalyzes two reactions: the carboxylation of D-ribulose 1,5-bisphosphate, the primary event in carbon dioxide fixation, as well as the oxidative fragmentation of the pentose substrate in the photorespiration process. Both reactions occur simultaneously and in competition at the same active site. The protein is Ribulose bisphosphate carboxylase large chain of Prochlorococcus marinus (strain MIT 9301).